The chain runs to 336 residues: DNA-directed RNA polymerase subunit alpha (336 aa).

The alpha N-terminal domain (alpha-NTD) stretch occupies residues 1 to 232; the sequence is MIQKNWQELI…DQLGLFVNFE (232 aa). The alpha C-terminal domain (alpha-CTD) stretch occupies residues 248 to 336; sequence FNPALLKKVD…ELAKRYEDQY (89 aa).

It belongs to the RNA polymerase alpha chain family. In terms of assembly, homodimer. The RNAP catalytic core consists of 2 alpha, 1 beta, 1 beta' and 1 omega subunit. When a sigma factor is associated with the core the holoenzyme is formed, which can initiate transcription.

The catalysed reaction is RNA(n) + a ribonucleoside 5'-triphosphate = RNA(n+1) + diphosphate. Its function is as follows. DNA-dependent RNA polymerase catalyzes the transcription of DNA into RNA using the four ribonucleoside triphosphates as substrates. In Chelativorans sp. (strain BNC1), this protein is DNA-directed RNA polymerase subunit alpha.